The primary structure comprises 308 residues: Aspartate carbamoyltransferase catalytic subunit (308 aa).

Carbamoyl phosphate-binding residues include arginine 57 and threonine 58. Residue lysine 86 participates in L-aspartate binding. Residues arginine 107, histidine 135, and glutamine 138 each contribute to the carbamoyl phosphate site. L-aspartate-binding residues include arginine 167 and arginine 228. Carbamoyl phosphate-binding residues include leucine 267 and proline 268.

It belongs to the aspartate/ornithine carbamoyltransferase superfamily. ATCase family. Heterooligomer of catalytic and regulatory chains.

It catalyses the reaction carbamoyl phosphate + L-aspartate = N-carbamoyl-L-aspartate + phosphate + H(+). It participates in pyrimidine metabolism; UMP biosynthesis via de novo pathway; (S)-dihydroorotate from bicarbonate: step 2/3. Catalyzes the condensation of carbamoyl phosphate and aspartate to form carbamoyl aspartate and inorganic phosphate, the committed step in the de novo pyrimidine nucleotide biosynthesis pathway. This chain is Aspartate carbamoyltransferase catalytic subunit, found in Methanococcoides burtonii (strain DSM 6242 / NBRC 107633 / OCM 468 / ACE-M).